The primary structure comprises 805 residues: Probable inorganic carbon transporter subunit DabA (805 aa).

Zn(2+) is bound by residues C334, D336, H491, and C506.

This sequence belongs to the inorganic carbon transporter (TC 9.A.2) DabA family. In terms of assembly, forms a complex with DabB. Requires Zn(2+) as cofactor.

The protein resides in the cell inner membrane. In terms of biological role, part of an energy-coupled inorganic carbon pump. The sequence is that of Probable inorganic carbon transporter subunit DabA from Ruegeria sp. (strain TM1040) (Silicibacter sp.).